A 134-amino-acid chain; its full sequence is Arginine decarboxylase proenzyme (134 aa).

Serine 82 functions as the Schiff-base intermediate with substrate; via pyruvic acid in the catalytic mechanism. Serine 82 carries the post-translational modification Pyruvic acid (Ser); by autocatalysis. The Proton acceptor; for processing activity role is filled by histidine 87. Cysteine 102 acts as the Proton donor; for catalytic activity in catalysis.

The protein belongs to the prokaryotic AdoMetDC family. Type 1 subfamily. As to quaternary structure, heterooctamer of four alpha and four beta chains arranged as a tetramer of alpha/beta heterodimers. It depends on pyruvate as a cofactor. In terms of processing, is synthesized initially as an inactive proenzyme. Formation of the active enzyme involves a self-maturation process in which the active site pyruvoyl group is generated from an internal serine residue via an autocatalytic post-translational modification. Two non-identical subunits are generated from the proenzyme in this reaction, and the pyruvate is formed at the N-terminus of the alpha chain, which is derived from the carboxyl end of the proenzyme. The post-translation cleavage follows an unusual pathway, termed non-hydrolytic serinolysis, in which the side chain hydroxyl group of the serine supplies its oxygen atom to form the C-terminus of the beta chain, while the remainder of the serine residue undergoes an oxidative deamination to produce ammonia and the pyruvoyl group blocking the N-terminus of the alpha chain.

It catalyses the reaction L-arginine + H(+) = agmatine + CO2. Its pathway is amine and polyamine biosynthesis; agmatine biosynthesis; agmatine from L-arginine: step 1/1. Highly competitively inhibited by L-argininamide and L-arginine methyl ester. Also inhibited by alpha-difluoromethylarginine. Is not stimulated by potassium chloride as observed for other decarboxylases. Functionally, specifically catalyzes the decarboxylation of L-arginine to agmatine. Is also able to decarboxylate L-canavanine, although less efficiently. Has no S-adenosylmethionine decarboxylase (AdoMetDC) activity. The protein is Arginine decarboxylase proenzyme of Saccharolobus solfataricus (strain ATCC 35092 / DSM 1617 / JCM 11322 / P2) (Sulfolobus solfataricus).